A 373-amino-acid chain; its full sequence is Glutamine synthetase (373 aa).

At Ala2 the chain carries N-acetylalanine. The required for glutamine-induced ubiquitination by CRL4(CRBN) and proteasomal degradation stretch occupies residues 2-25 (ATSASSHLNKGIKQVYMSLPQGEK). 2 positions are modified to N6-acetyllysine: Lys11 and Lys14. The GS beta-grasp domain occupies 24–106 (EKVQAMYIWI…VFCEVFKYNR (83 aa)). Position 104 is a phosphotyrosine (Tyr104). One can recognise a GS catalytic domain in the interval 113-373 (LRHTCKRIMD…TGDEPFQYKN (261 aa)). Position 134 (Glu134) interacts with ATP. Mn(2+) is bound by residues Glu134, Glu136, Glu196, and Glu203. An ATP-binding site is contributed by 203–208 (EFQIGP). An L-glutamate-binding site is contributed by 246 to 247 (NW). A Mn(2+)-binding site is contributed by His253. ATP-binding positions include 255–257 (NFS), Arg319, and Arg324. Arg319 contributes to the L-glutamate binding site. 336–338 (YFE) is an ADP binding site. Glu338 is a binding site for Mn(2+). L-glutamate is bound at residue Arg340. Ser343 carries the post-translational modification Phosphoserine.

It belongs to the glutamine synthetase family. As to quaternary structure, decamer; composed of two pentamers. Interacts with PALMD. Interacts with RHOJ. Interacts with BEST2; this interaction tethers a fraction of GLUL to the membrane, causing a decrease of cytosolic glutamine synthase (GS) activity and inhibits the chloride channel activity of BEST2 by affecting the gating at the aperture in the absence of intracellular glutamate. The cofactor is Mg(2+). Requires Mn(2+) as cofactor. Post-translationally, palmitoylated; undergoes autopalmitoylation. Acetylated by EP300/p300; acetylation is stimulated by increased glutamine levels and promotes ubiquitin-mediated proteasomal degradation. In terms of processing, ubiquitinated by ZNRF1. Ubiquitinated by the DCX (DDB1-CUL4-X-box) E3 ubiquitin-protein ligase complex called CRL4(CRBN), leading to proteasomal degradation.

The protein resides in the cytoplasm. Its subcellular location is the cytosol. The protein localises to the microsome. It localises to the mitochondrion. It is found in the cell membrane. The enzyme catalyses L-glutamate + NH4(+) + ATP = L-glutamine + ADP + phosphate + H(+). The catalysed reaction is L-cysteinyl-[protein] + hexadecanoyl-CoA = S-hexadecanoyl-L-cysteinyl-[protein] + CoA. Its activity is regulated as follows. Glutamine synthetase activity is inhibited by methionine sulfoximine (MSO). In terms of biological role, glutamine synthetase that catalyzes the ATP-dependent conversion of glutamate and ammonia to glutamine. Its role depends on tissue localization: in the brain, it regulates the levels of toxic ammonia and converts neurotoxic glutamate to harmless glutamine, whereas in the liver, it is one of the enzymes responsible for the removal of ammonia. Plays a key role in ammonium detoxification during erythropoiesis: the glutamine synthetase activity is required to remove ammonium generated by porphobilinogen deaminase (HMBS) during heme biosynthesis to prevent ammonium accumulation and oxidative stress. Essential for proliferation of fetal skin fibroblasts. Independently of its glutamine synthetase activity, required for endothelial cell migration during vascular development. Involved in angiogenesis by regulating membrane localization and activation of the GTPase RHOJ, possibly by promoting RHOJ palmitoylation. May act as a palmitoyltransferase for RHOJ: able to autopalmitoylate and then transfer the palmitoyl group to RHOJ. Plays a role in ribosomal 40S subunit biogenesis. Through the interaction with BEST2, inhibits BEST2 channel activity by affecting the gating at the aperture in the absence of intracellular L-glutamate, but sensitizes BEST2 to intracellular L-glutamate, which promotes the opening of BEST2 and thus relieves its inhibitory effect on BEST2. This chain is Glutamine synthetase, found in Canis lupus familiaris (Dog).